Consider the following 259-residue polypeptide: Acyl-[acyl-carrier-protein]--UDP-N-acetylglucosamine O-acyltransferase (259 aa).

It belongs to the transferase hexapeptide repeat family. LpxA subfamily. As to quaternary structure, homotrimer.

The protein resides in the cytoplasm. It catalyses the reaction a (3R)-hydroxyacyl-[ACP] + UDP-N-acetyl-alpha-D-glucosamine = a UDP-3-O-[(3R)-3-hydroxyacyl]-N-acetyl-alpha-D-glucosamine + holo-[ACP]. It participates in glycolipid biosynthesis; lipid IV(A) biosynthesis; lipid IV(A) from (3R)-3-hydroxytetradecanoyl-[acyl-carrier-protein] and UDP-N-acetyl-alpha-D-glucosamine: step 1/6. Involved in the biosynthesis of lipid A, a phosphorylated glycolipid that anchors the lipopolysaccharide to the outer membrane of the cell. The protein is Acyl-[acyl-carrier-protein]--UDP-N-acetylglucosamine O-acyltransferase of Psychrobacter arcticus (strain DSM 17307 / VKM B-2377 / 273-4).